The chain runs to 263 residues: LIM and SH3 domain protein 1 (263 aa).

Methionine 1 carries the post-translational modification N-acetylmethionine. In terms of domain architecture, LIM zinc-binding spans 5–56 (CARCGKIVYPTEKVNCLDKYWHKACFHCETCKMTLNMKNYKGYEKKPYCNAH). Lysine 42 carries the post-translational modification N6-acetyllysine. Nebulin repeat units lie at residues 61–95 (SFTMVADTPENLRLKQQSELQSQVRYKEEFEKNKG) and 97–131 (GFSVVADTPELQRIKKTQDQISNIKYHEEFEKSRM). Threonine 68 carries the post-translational modification Phosphothreonine. N6-methyllysine is present on lysine 75. Serine 99 carries the phosphoserine modification. Position 104 is a phosphothreonine (threonine 104). At lysine 112 the chain carries N6-succinyllysine. Serine 118 and serine 134 each carry phosphoserine. The disordered stretch occupies residues 123–207 (HEEFEKSRMG…QRSAPGGGGK (85 aa)). The span at 148-162 (DSSSYRRPTEQQQPQ) shows a compositional bias: polar residues. Threonine 156 carries the post-translational modification Phosphothreonine; by PKA. Residues 204-263 (GGGKRYRAVYDYSAADEDEVSFQDGDTIVNVQQIDDGWMYGTVERTGDTGMLPANYVEAI) enclose the SH3 domain.

Interacts with F-actin. Interacts with KBTBD10. Interacts with ANKRD54.

Its subcellular location is the cytoplasm. The protein localises to the cell cortex. The protein resides in the cytoskeleton. Functionally, plays an important role in the regulation of dynamic actin-based, cytoskeletal activities. Agonist-dependent changes in LASP1 phosphorylation may also serve to regulate actin-associated ion transport activities, not only in the parietal cell but also in certain other F-actin-rich secretory epithelial cell types. This chain is LIM and SH3 domain protein 1 (Lasp1), found in Mus musculus (Mouse).